We begin with the raw amino-acid sequence, 106 residues long: Nucleoid-associated protein RPB_0667 (106 aa).

The protein belongs to the YbaB/EbfC family. Homodimer.

It is found in the cytoplasm. The protein resides in the nucleoid. In terms of biological role, binds to DNA and alters its conformation. May be involved in regulation of gene expression, nucleoid organization and DNA protection. The protein is Nucleoid-associated protein RPB_0667 of Rhodopseudomonas palustris (strain HaA2).